A 218-amino-acid polypeptide reads, in one-letter code: Adenylate kinase (218 aa).

10 to 15 (GAGKGT) is a binding site for ATP. Residues 30-59 (STGDMLRAAVKAGTPLGLEAKKVMDAGGLV) form an NMP region. Residues Thr-31, Arg-36, 57–59 (GLV), 85–88 (GFPR), and Gln-92 contribute to the AMP site. Residues 122–159 (GRRVHVASGRTYHVKFNPPKVAGKDDETGEDLIQRADD) form an LID region. Residues Arg-123 and 132–133 (TY) contribute to the ATP site. AMP is bound by residues Arg-156 and Arg-167. Gly-203 is an ATP binding site.

The protein belongs to the adenylate kinase family. Monomer.

Its subcellular location is the cytoplasm. It catalyses the reaction AMP + ATP = 2 ADP. The protein operates within purine metabolism; AMP biosynthesis via salvage pathway; AMP from ADP: step 1/1. Catalyzes the reversible transfer of the terminal phosphate group between ATP and AMP. Plays an important role in cellular energy homeostasis and in adenine nucleotide metabolism. The polypeptide is Adenylate kinase (Laribacter hongkongensis (strain HLHK9)).